A 156-amino-acid chain; its full sequence is Small ribosomal subunit protein uS7 (156 aa).

Belongs to the universal ribosomal protein uS7 family. In terms of assembly, part of the 30S ribosomal subunit. Contacts proteins S9 and S11.

Its function is as follows. One of the primary rRNA binding proteins, it binds directly to 16S rRNA where it nucleates assembly of the head domain of the 30S subunit. Is located at the subunit interface close to the decoding center, probably blocks exit of the E-site tRNA. The chain is Small ribosomal subunit protein uS7 from Limosilactobacillus fermentum (strain NBRC 3956 / LMG 18251) (Lactobacillus fermentum).